Reading from the N-terminus, the 191-residue chain is Putative glutathione-dependent formaldehyde-activating enzyme (191 aa).

Residues 20–166 enclose the CENP-V/GFA domain; it reads FSGGTLRCHC…FKSVGLETYD (147 aa). The Zn(2+) site is built by C27, C29, C48, C50, C53, C95, and C98.

It belongs to the Gfa family. The cofactor is Zn(2+).

The enzyme catalyses S-(hydroxymethyl)glutathione = glutathione + formaldehyde. It participates in one-carbon metabolism; formaldehyde degradation; formate from formaldehyde (glutathione route): step 1/3. Functionally, catalyzes the condensation of formaldehyde and glutathione to S-hydroxymethylglutathione. In Colletotrichum graminicola (strain M1.001 / M2 / FGSC 10212) (Maize anthracnose fungus), this protein is Putative glutathione-dependent formaldehyde-activating enzyme.